The primary structure comprises 104 residues: Large ribosomal subunit protein bL21 (104 aa).

It belongs to the bacterial ribosomal protein bL21 family. Part of the 50S ribosomal subunit. Contacts protein L20.

Functionally, this protein binds to 23S rRNA in the presence of protein L20. The protein is Large ribosomal subunit protein bL21 of Lactococcus lactis subsp. cremoris (strain MG1363).